A 251-amino-acid chain; its full sequence is Probable transcriptional regulatory protein Pmob_0807 (251 aa).

The tract at residues 1 to 22 (MSGHNKWANIKHRKGAQDAKRS) is disordered.

Belongs to the TACO1 family.

The protein resides in the cytoplasm. The chain is Probable transcriptional regulatory protein Pmob_0807 from Petrotoga mobilis (strain DSM 10674 / SJ95).